Reading from the N-terminus, the 186-residue chain is Transposons Tn1721 resolvase (186 aa).

The Resolvase/invertase-type recombinase catalytic domain maps to 4-137 (HRIGYVRVSS…EGIALAKQRG (134 aa)). The active-site O-(5'-phospho-DNA)-serine intermediate is the Ser-12. Residues 164-183 (KAQLAREFNISRETLYQYLR) constitute a DNA-binding region (H-T-H motif).

This sequence belongs to the site-specific recombinase resolvase family.

Its function is as follows. Resolvase catalyzes the resolution (a site-specific recombination) of the cointegrated replicon to yield the final transposition products. The sequence is that of Transposons Tn1721 resolvase (tnpR) from Escherichia coli.